The sequence spans 96 residues: Co-chaperonin GroES (96 aa).

It belongs to the GroES chaperonin family. As to quaternary structure, heptamer of 7 subunits arranged in a ring. Interacts with the chaperonin GroEL.

It is found in the cytoplasm. Its function is as follows. Together with the chaperonin GroEL, plays an essential role in assisting protein folding. The GroEL-GroES system forms a nano-cage that allows encapsulation of the non-native substrate proteins and provides a physical environment optimized to promote and accelerate protein folding. GroES binds to the apical surface of the GroEL ring, thereby capping the opening of the GroEL channel. The sequence is that of Co-chaperonin GroES from Neisseria meningitidis serogroup A / serotype 4A (strain DSM 15465 / Z2491).